An 84-amino-acid polypeptide reads, in one-letter code: M-myrmeciitoxin-Mb2a (84 aa).

Residues 1–21 form the signal peptide; that stretch reads MKLSCLLLTLAIIFVLTIVHA. Residues 22 to 48 constitute a propeptide that is removed on maturation; the sequence is PNVKAKALADPESDAVGFADAVGEADP.

It belongs to the formicidae venom precursor-01 superfamily. Ant pilosulin family. In terms of tissue distribution, expressed by the venom gland.

The protein localises to the secreted. In terms of biological role, shows activity against E.coli and S.aureus (MIC&lt;6.25 uM), moderate activity against P.aeruginosa (MIC&lt;25 uM), weak activity against B.subtilis (MIC&lt;50 uM), and has no effect against L.garvieae, C.albicans, and S.cerevisiae. Has no hemolytic nor cytolytic activity. Causes an IgE-independent histamine release. The polypeptide is M-myrmeciitoxin-Mb2a (Myrmecia banksi (Jack jumper ant)).